The following is a 103-amino-acid chain: Large ribosomal subunit protein bL21 (103 aa).

The protein belongs to the bacterial ribosomal protein bL21 family. Part of the 50S ribosomal subunit. Contacts protein L20.

In terms of biological role, this protein binds to 23S rRNA in the presence of protein L20. This chain is Large ribosomal subunit protein bL21, found in Laribacter hongkongensis (strain HLHK9).